The following is a 334-amino-acid chain: L-lactate dehydrogenase B chain (334 aa).

Ala2 is subject to N-acetylalanine. Residue Lys7 is modified to N6-acetyllysine. NAD(+) is bound by residues 30–58 and Arg100; that span reads GQVGMACAISILGKSLTDELALVDVLEDK. Ser44 bears the Phosphoserine mark. N6-acetyllysine is present on Lys58. A substrate-binding site is contributed by Arg107. Residue Lys119 is modified to N6-acetyllysine. Asn139 contributes to the NAD(+) binding site. Residues Asn139 and Arg170 each coordinate substrate. His194 serves as the catalytic Proton acceptor. A Phosphotyrosine modification is found at Tyr240. Substrate is bound at residue Thr249. Lys329 is subject to N6-acetyllysine.

Belongs to the LDH/MDH superfamily. LDH family. Homotetramer. Interacts with PTEN upstream reading frame protein MP31; the interaction leads to inhibition of mitochondrial lactate dehydrogenase activity, preventing conversion of lactate to pyruvate in mitochondria.

Its subcellular location is the cytoplasm. It localises to the mitochondrion inner membrane. The catalysed reaction is (S)-lactate + NAD(+) = pyruvate + NADH + H(+). It functions in the pathway fermentation; pyruvate fermentation to lactate; (S)-lactate from pyruvate: step 1/1. In terms of biological role, interconverts simultaneously and stereospecifically pyruvate and lactate with concomitant interconversion of NADH and NAD(+). This Sus scrofa (Pig) protein is L-lactate dehydrogenase B chain (LDHB).